The primary structure comprises 2785 residues: Testis-expressed protein 15 (2785 aa).

Residues 262–274 (SSSFPSSLSNAFS) are compositionally biased toward low complexity. Disordered stretches follow at residues 262–331 (SSSF…PSSD), 596–620 (EQRD…SEKQ), 661–683 (NGKP…APND), 904–924 (TEST…GMCS), 943–1064 (VQES…QGRI), 2276–2458 (NRQE…TNDK), 2470–2511 (DIDA…LVPD), and 2571–2601 (TQPI…GNSA). The segment covering 275-286 (DVRKQKHSEEQV) has biased composition (basic and acidic residues). A compositionally biased stretch (polar residues) spans 314-331 (TCSNDSQGHFSQESPSSD). Basic and acidic residues predominate over residues 596 to 611 (EQRDDKNPNEAKEHNT). Composition is skewed to polar residues over residues 962 to 989 (HNTH…TVMN) and 1021 to 1031 (HASSSRGQNIA). Residues 1033–1042 (KDLREHETHE) are compositionally biased toward basic and acidic residues. 8 stretches are compositionally biased toward polar residues: residues 1049–1064 (SHGS…QGRI), 2291–2314 (DSSQ…NISD), 2327–2338 (EVSQGKGNTDTV), 2353–2387 (NIQT…SISA), 2394–2415 (RQSS…CTPK), 2431–2454 (ASLT…SVAE), 2491–2502 (DHTQISPSNLTA), and 2585–2601 (DAPN…GNSA).

Belongs to the TEX15 family. Interacts with PIWIL4. Interacts with PIWIL2. In terms of tissue distribution, detected in testis and ovary, and at lower levels in lung and brain.

It localises to the cytoplasm. The protein resides in the nucleus. In terms of biological role, required during spermatogenesis for normal chromosome synapsis and meiotic recombination in germ cells. Necessary for formation of DMC1 and RAD51 foci on meiotic chromosomes, suggesting a specific role in DNA double-stranded break repair. Essential executor of PIWIL4-piRNA pathway directed transposon DNA methylation and silencing in the male embryonic germ cells. PIWIL4-piRNA binds to nascent transposon transcripts and interacts with TEX15, which may in turn recruit the epigenetic silencing machinery to the transposon loci. Not required for piRNA biosynthesis. The polypeptide is Testis-expressed protein 15 (Mus musculus (Mouse)).